A 461-amino-acid polypeptide reads, in one-letter code: MSFRSVLLTALLSLSFTTTMQAAHHHYHRYTDKLHRQNHKKDLISPKPTEQEACNTPSLSKELIPLSEQRGLLSPIYDFISERLCLHGVSVRNLKQALKNSAGTQIALDWSILPQWFNPRVSHAPKLSIRDFGYSAHQTVTEATPPCWQNCFNPSAAVTIYDSSYGKGVFQISYTLVHYWRENAATAGDAMMLAGSINDYPSRQNIFSQFTFSQNFPNERVSLTIGQYSLYAIDGTLYNNDQQLGFISYALSQNPTATYSSGSLGAYLQVAPTASTSLQIGFQDAYNISGSSIKWSNLTKNRYNFHGFASWAPRCCLGSGQYSVLLYVTRQVPEQMEQTMGWSVNASQYISSKLYVFGRYSGVTGHVFPINRTYSCGMVSANLFNRNPQDLFGIACAFNNVHLSASPNAKRKYETVIEGFATIGCGPYLSFAPDFQLYLYPALRPNKQSARVYSVRANLAI.

The N-terminal stretch at 1-22 (MSFRSVLLTALLSLSFTTTMQA) is a signal peptide.

This sequence belongs to the OprB family.

It is found in the cell outer membrane. Functionally, facilitates L-arginine uptake, as part of the AaxABC system. The arginine uptake by the bacterium in the macrophage may be a virulence factor against the host innate immune response. This chain is Porin AaxA (aaxA), found in Chlamydia trachomatis serovar L2 (strain ATCC VR-902B / DSM 19102 / 434/Bu).